Reading from the N-terminus, the 256-residue chain is DNA repair protein RecO (256 aa).

Belongs to the RecO family.

Involved in DNA repair and RecF pathway recombination. The chain is DNA repair protein RecO from Streptococcus pneumoniae serotype 19F (strain G54).